A 211-amino-acid polypeptide reads, in one-letter code: Beta-crystallin B3 (211 aa).

Residue Met-1 is modified to N-acetylmethionine. Ala-2 carries the post-translational modification N-acetylalanine; in Beta-crystallin B3, N-terminally processed. The segment at 2–23 (AEQHSTPEQAAAGKSHGGLGGS) is N-terminal arm. 2 Beta/gamma crystallin 'Greek key' domains span residues 24–63 (YKVIVYEMENFQGKRCELTAECPNLTESLLEKVGSIQVES) and 64–108 (GPWL…RPLH). The tract at residues 109 to 113 (IDGPD) is connecting peptide. 2 consecutive Beta/gamma crystallin 'Greek key' domains span residues 114-155 (HKLH…RAIN) and 156-198 (GTWV…RRIR). A C-terminal arm region spans residues 200 to 211 (QKWHKRGVFLSS).

It belongs to the beta/gamma-crystallin family. In terms of assembly, homo/heterodimer, or complexes of higher-order. The structure of beta-crystallin oligomers seems to be stabilized through interactions between the N-terminal arms.

Its function is as follows. Crystallins are the dominant structural components of the vertebrate eye lens. In Bos taurus (Bovine), this protein is Beta-crystallin B3 (CRYBB3).